A 465-amino-acid chain; its full sequence is Putative apoptosis inhibitor ORF106 (465 aa).

A BIR repeat occupies 291–357 (RECSFSTWPK…MEKETCGWLE (67 aa)). Acidic residues predominate over residues 373 to 382 (EGGEDKEEDG). A disordered region spans residues 373 to 393 (EGGEDKEEDGGGGGVIEFPKN). An RING-type zinc finger spans residues 405–447 (CKACYERKADIAFIPCGHVFSCNICTMEMFASYKKKKRCPMCR).

This chain is Putative apoptosis inhibitor ORF106, found in Magallana gigas (Pacific oyster).